Consider the following 131-residue polypeptide: Small ribosomal subunit protein uS8 (131 aa).

Belongs to the universal ribosomal protein uS8 family. In terms of assembly, part of the 30S ribosomal subunit. Contacts proteins S5 and S12.

Its function is as follows. One of the primary rRNA binding proteins, it binds directly to 16S rRNA central domain where it helps coordinate assembly of the platform of the 30S subunit. This chain is Small ribosomal subunit protein uS8, found in Legionella pneumophila (strain Paris).